The sequence spans 780 residues: MATSNLLKNKGSLQFEDKWDFMHPIVLKLLRQESVTKQQWFDLFSDVHAVCLWDDKGSSKIHQALKEDILEFIKQAQARVLSHQDDTALLKAYIVEWRKFFTQCDILPKPFCQLEVTLLGKQSSNKKSNMEDSIVRKLMLDTWNESIFSNIKNRLQDSAMKLVHAERLGEAFDSQLVIGVRESYVNLCSNPEDKLQIYRDNFEKAYLDSTERFYRTQAPSYLQQNGVQNYMKYADAKLKEEEKRALRYLETRRECNSVEALMECCVNALVTSFKETILAECQGMIKRNETEKLHLMFSLMDKVPNGIEPMLKDLEEHIISAGLADMVAAAETITTDSEKYVEQLLTLFNRFSKLVKEAFQDDPRFLTARDKAYKAVVNDATIFKLELPLKQKGVGLKTQPESKCPELLANYCDMLLRKTPLSKKLTSEEIEAKLKEVLLVLKYVQNKDVFMRYHKAHLTRRLILDISADSEIEENMVEWLREVGMPADYVNKLARMFQDIKVSEDLNQAFKEMHKNNKLALPADSVNIKILNAGAWSRSSEKVFVSLPTELEDLIPEVEEFYKKNHSGRKLHWHHLMSNGIITFKNEVGQYDLEVTTFQLAVLFAWNQRPREKISFENLKLATELPDAELRRTLWSLVAFPKLKRQVLLYDPQVNSPKDFTEGTLFSVNQDFSLIKNAKVQKRGKINLIGRLQLTTERMREEENEGIVQLRILRTQEAIIQIMKMRKKISNAQLQTELVEILKNMFLPQKKMIKEQMEWLIEHRYIRRDEADINTFIYMA.

S34 is subject to Phosphoserine. T210 bears the Phosphothreonine mark. The Cullin neddylation domain occupies 711-772 (RILRTQEAII…HRYIRRDEAD (62 aa)). K724 is covalently cross-linked (Glycyl lysine isopeptide (Lys-Gly) (interchain with G-Cter in NEDD8)).

This sequence belongs to the cullin family. In terms of assembly, component of multiple cullin-5-RING E3 ubiquitin-protein ligase complexes (ECS complexes, also named CRL5 complexes) formed of CUL5, Elongin BC (ELOB and ELOC), RNF7/RBX2 and a variable SOCS box domain-containing protein as substrate-specific recognition component. CUL5-containing ECS complexes specifically contain RNF7/RBX2, and not RBX1, as catalytic subunit. Component of the ECS(ASB2) complex with the substrate recognition component ASB2. Component of the ECS(ASB6) complex with the substrate recognition component ASB6. Component of the ECS(ASB7) complex with the substrate recognition component ASB7. Component of the ECS(ASB9) complex with the substrate recognition component ASB9. Component of the ECS(ASB11) complex with the substrate recognition component ASB11. Component of the ECS(ASB12) complex with the substrate recognition component ASB12. Component of the ECS(LRRC41) complex with the substrate recognition component LRRC41. Component of the ECS(SOCS1) complex with the substrate recognition component SOCS1. Component of the ECS(SOCS2) complex with the substrate recognition component SOCS2. Component of the ECS(WSB1) complex with the substrate recognition subunit WSB1. Component of the ECS(SOCS3) complex with the substrate recognition component SOCS3. Component of the ECS(SOCS7) complex with the substrate recognition component SOCS7. Component of the ECS(SPSB1) complex with the substrate recognition component SPSB1. Component of the ECS(SPSB3) complex with the substrate recognition component SPSB3. Component of the ECS(SPSB2) complex with the substrate recognition component SPSB2. Component of the ECS(SPSB4) complex with the substrate recognition component SPSB4. Component of the ECS(RAB40) complex with the substrate recognition subunit RAB40A, RAB40B or RAB40C. Component of the ECS(KLHDC1) complex with the substrate recognition component KLHDC1. Component of the ECS(PCMTD1) complex with the substrate recognition subunit PCMTD1. May also form complexes containing RBX1 and ELOA or VHL; additional evidence is however required to confirm this result in vivo. Interacts (when neddylated) with ARIH2; leading to activate the E3 ligase activity of ARIH2. Interacts with ERCC6; the interaction is induced by DNA damaging agents or inhibitors of RNA polymerase II elongation. Interacts with ELOA (via the BC-box). Interacts (unneddylated form) with DCUN1D1, DCUN1D2, DCUN1D3, DCUN1D4 and DCUN1D5; these interactions promote the cullin neddylation. Neddylated; which enhances the ubiquitination activity of ECS complexes and prevents binding of the inhibitor CAND1. Deneddylated via its interaction with the COP9 signalosome (CSN).

It localises to the nucleus. It participates in protein modification; protein ubiquitination. Core component of multiple cullin-5-RING E3 ubiquitin-protein ligase complexes (ECS complexes, also named CRL5 complexes), which mediate the ubiquitination and subsequent proteasomal degradation of target proteins. Acts a scaffold protein that contributes to catalysis through positioning of the substrate and the ubiquitin-conjugating enzyme. The functional specificity of the E3 ubiquitin-protein ligase complex depends on the variable SOCS box-containing substrate recognition component. Acts as a key regulator of neuron positioning during cortex development: component of various SOCS-containing ECS complexes, such as the ECS(SOCS7) complex, that regulate reelin signaling by mediating ubiquitination and degradation of DAB1. ECS(SOCS1) seems to direct ubiquitination of JAK2. The ECS(SOCS2) complex mediates the ubiquitination and subsequent proteasomal degradation of phosphorylated EPOR and GHR. The ECS(SPSB3) complex catalyzes ubiquitination of nuclear CGAS. ECS(KLHDC1) complex is part of the DesCEND (destruction via C-end degrons) pathway and mediates ubiquitination and degradation of truncated SELENOS selenoprotein produced by failed UGA/Sec decoding, which ends with a glycine. The ECS(ASB9) complex mediates ubiquitination and degradation of CKB. As part of some ECS complex, promotes 'Lys-11'-linked ubiquitination and degradation of BTRC. As part of a multisubunit ECS complex, polyubiquitinates monoubiquitinated POLR2A. As part of the ECS(RAB40C) complex, mediates ANKRD28 ubiquitination and degradation, thereby regulating protein phosphatase 6 (PP6) complex activity and focal adhesion assembly during cell migration. As part of the ECS(RAB40A) complex, mediates RHOU 'Lys-48'-linked ubiquitination and degradation, thus inhibiting focal adhesion disassembly during cell migration. As part of the ECS(RAB40B) complex, mediates LIMA1/EPLIN and RAP2 ubiquitination, thereby regulating actin cytoskeleton dynamics and stress fiber formation during cell migration. May form a cell surface vasopressin receptor. This is Cullin-5 from Mus musculus (Mouse).